Here is a 349-residue protein sequence, read N- to C-terminus: MVRAKRKLDHIEYALSTGQSRTHGFHDIDFVHQSLPNSSYETITCETKIGELSLSSPIFINAMTGGGGEKTLHINEQLAYVAKHHNLAMAVGSQMAALKDESEAASYKIIRKVNPNGIFFANLGSEATVEQAERAVDMVEANALQIHLNVIQELTMPEGDRDFTGVLQRIEKIVLNSKVPVIVKEVGFGMSKETMQQLASVGVTAIDIGGQGGTNFAAVENERRQRMLSYFNNWGIQTATSIIEATSTNNNLSFIASGGIQTALDVAKAIALGANTTAFAGYFLRILMEDGIEKLVDEIDLLHTDLKFIMTALGAKTIEELQSVPLVIKGETYHWLTQRGIDTTHYSRR.

Residue 6–7 (RK) coordinates substrate. Residues 62–64 (AMT), serine 93, and asparagine 122 each bind FMN. Residue glutamine 152 coordinates substrate. Residue glutamate 153 participates in Mg(2+) binding. Residues lysine 184, threonine 214, 258-259 (GG), and 280-281 (AG) each bind FMN.

This sequence belongs to the IPP isomerase type 2 family. As to quaternary structure, homooctamer. Dimer of tetramers. FMN serves as cofactor. The cofactor is NADPH. Requires Mg(2+) as cofactor.

It localises to the cytoplasm. It catalyses the reaction isopentenyl diphosphate = dimethylallyl diphosphate. In terms of biological role, involved in the biosynthesis of isoprenoids. Catalyzes the 1,3-allylic rearrangement of the homoallylic substrate isopentenyl (IPP) to its allylic isomer, dimethylallyl diphosphate (DMAPP). The sequence is that of Isopentenyl-diphosphate delta-isomerase from Bacillus thuringiensis subsp. konkukian (strain 97-27).